The primary structure comprises 228 residues: MLYGFSGVILQGALVTLELAISSVVLAVIIGLIGAGGKLSQNRLSGLIFEGYTTLIRGVPDLVLMLLIFYGLQIALNTVTEAMGVGQIDIDPMVAGIITLGFIYGAYFTETFRGAFMAVPKGHIEAATAFGFTRGQVFRRIMFPSMMRYALPGIGNNWQVILKSTALVSLLGLEDVVKATQLAGKSTWEPFYFAIVCGVIYLVFTTVSNGVLLFLERRYSVGVKRADL.

The Periplasmic portion of the chain corresponds to 1–12 (MLYGFSGVILQG). A helical transmembrane segment spans residues 13-33 (ALVTLELAISSVVLAVIIGLI). The ABC transmembrane type-1 domain maps to 13 to 212 (ALVTLELAIS…VFTTVSNGVL (200 aa)). At 34–58 (GAGGKLSQNRLSGLIFEGYTTLIRG) the chain is on the cytoplasmic side. Residues 59–79 (VPDLVLMLLIFYGLQIALNTV) form a helical membrane-spanning segment. Topologically, residues 80 to 87 (TEAMGVGQ) are periplasmic. A helical membrane pass occupies residues 88 to 108 (IDIDPMVAGIITLGFIYGAYF). The Cytoplasmic segment spans residues 109–148 (TETFRGAFMAVPKGHIEAATAFGFTRGQVFRRIMFPSMMR). Residues 149–171 (YALPGIGNNWQVILKSTALVSLL) form a helical membrane-spanning segment. Topologically, residues 172–194 (GLEDVVKATQLAGKSTWEPFYFA) are periplasmic. A helical membrane pass occupies residues 195 to 215 (IVCGVIYLVFTTVSNGVLLFL). Residues 216–228 (ERRYSVGVKRADL) lie on the Cytoplasmic side of the membrane.

The protein belongs to the binding-protein-dependent transport system permease family. HisMQ subfamily. The HisPMQJ complex is composed of two ATP-binding proteins (HisP), two transmembrane proteins (HisM and HisQ) and a solute-binding protein (HisJ). The HisPMQ-ArgT complex is composed of two ATP-binding proteins (HisP), two transmembrane proteins (HisM and HisQ) and a solute-binding protein (ArgT).

Its subcellular location is the cell inner membrane. Its function is as follows. Part of the ABC transporter complex HisPMQJ involved in histidine transport. Is also part of the ABC transporter complex HisPMQ-ArgT involved in lysine/arginine/ornithine transport. Probably responsible for the translocation of the substrate across the membrane. This Escherichia coli (strain K12) protein is Histidine/lysine/arginine/ornithine transport system permease protein HisQ (hisQ).